The chain runs to 332 residues: Delta-aminolevulinic acid dehydratase (332 aa).

Lys-199 functions as the Schiff-base intermediate with substrate in the catalytic mechanism. Residues Arg-209 and Lys-221 each contribute to the 5-aminolevulinate site. Mg(2+) is bound at residue Glu-237. Lys-252 functions as the Schiff-base intermediate with substrate in the catalytic mechanism. The 5-aminolevulinate site is built by Ser-278 and Tyr-317.

Belongs to the ALAD family. In terms of assembly, homooctamer.

The catalysed reaction is 2 5-aminolevulinate = porphobilinogen + 2 H2O + H(+). The protein operates within porphyrin-containing compound metabolism; protoporphyrin-IX biosynthesis; coproporphyrinogen-III from 5-aminolevulinate: step 1/4. Functionally, catalyzes an early step in the biosynthesis of tetrapyrroles. Binds two molecules of 5-aminolevulinate per subunit, each at a distinct site, and catalyzes their condensation to form porphobilinogen. This is Delta-aminolevulinic acid dehydratase (hemB) from Chlamydia pneumoniae (Chlamydophila pneumoniae).